A 99-amino-acid chain; its full sequence is MMMNAFFPAMALMVLVGCSTPSPVQKAQRVRVDPLRSLNMEALCKDQAAKRYNTGEQKIDVTAFEQFQGSYEMRGYTFRKEQFVCSFDADGHFLHLSMR.

Positions 1-17 (MMMNAFFPAMALMVLVG) are cleaved as a signal peptide. The N-palmitoyl cysteine moiety is linked to residue Cys18. A lipid anchor (S-diacylglycerol cysteine) is attached at Cys18.

The protein localises to the cell membrane. This is an uncharacterized protein from Shigella flexneri.